Reading from the N-terminus, the 196-residue chain is uncharacterized protein (196 aa).

Positions 44–80 (RSVAVPGTEGKKAQNLRQLPAARLTYPTSSSTRPSHA) are disordered.

This is an uncharacterized protein from Treponema pallidum (strain Nichols).